Reading from the N-terminus, the 347-residue chain is GMP reductase (347 aa).

An NADP(+)-binding site is contributed by 108-131; that stretch reads ADFEKTKQILDLNPALNFVCIDVA. K(+)-binding residues include G181 and G183. Catalysis depends on C186, which acts as the Thioimidate intermediate. 216-239 provides a ligand contact to NADP(+); sequence IVSDGGCTTPGDVAKAFGGGADFV.

It belongs to the IMPDH/GMPR family. GuaC type 1 subfamily. As to quaternary structure, homotetramer.

It catalyses the reaction IMP + NH4(+) + NADP(+) = GMP + NADPH + 2 H(+). Functionally, catalyzes the irreversible NADPH-dependent deamination of GMP to IMP. It functions in the conversion of nucleobase, nucleoside and nucleotide derivatives of G to A nucleotides, and in maintaining the intracellular balance of A and G nucleotides. The sequence is that of GMP reductase from Shigella dysenteriae serotype 1 (strain Sd197).